Reading from the N-terminus, the 389-residue chain is S-adenosylmethionine synthase (389 aa).

Position 16 (histidine 16) interacts with ATP. Aspartate 18 serves as a coordination point for Mg(2+). Glutamate 44 contributes to the K(+) binding site. L-methionine is bound by residues glutamate 57 and glutamine 100. Positions 100–110 (QSPDIAQGVDE) are flexible loop. Residues 167-169 (DAK), 233-234 (RF), aspartate 242, 248-249 (RK), alanine 265, and lysine 269 each bind ATP. Residue aspartate 242 coordinates L-methionine. Lysine 273 serves as a coordination point for L-methionine.

This sequence belongs to the AdoMet synthase family. In terms of assembly, homotetramer; dimer of dimers. Mg(2+) serves as cofactor. The cofactor is K(+).

The protein localises to the cytoplasm. The catalysed reaction is L-methionine + ATP + H2O = S-adenosyl-L-methionine + phosphate + diphosphate. It participates in amino-acid biosynthesis; S-adenosyl-L-methionine biosynthesis; S-adenosyl-L-methionine from L-methionine: step 1/1. Functionally, catalyzes the formation of S-adenosylmethionine (AdoMet) from methionine and ATP. The overall synthetic reaction is composed of two sequential steps, AdoMet formation and the subsequent tripolyphosphate hydrolysis which occurs prior to release of AdoMet from the enzyme. This chain is S-adenosylmethionine synthase, found in Acidithiobacillus ferrooxidans (strain ATCC 23270 / DSM 14882 / CIP 104768 / NCIMB 8455) (Ferrobacillus ferrooxidans (strain ATCC 23270)).